The chain runs to 103 residues: uncharacterized protein (103 aa).

A run of 2 helical transmembrane segments spans residues 13-33 (LLPF…YCIL) and 77-97 (FSIY…PYLF).

It localises to the endoplasmic reticulum membrane. This is an uncharacterized protein from Schizosaccharomyces pombe (strain 972 / ATCC 24843) (Fission yeast).